The following is a 371-amino-acid chain: MPANFTEGSFDSSGTGQTLDSSPVACTETVTFTEVVEGKEWGSFYYSFKTEQLITLWVLFVFTIVGNSVVLFSTWRRKKKSRMTFFVTQLAITDSFTGLVNILTDINWRFTGDFTAPDLVCRVVRYLQVVLLYASTYVLVSLSIDRYHAIVYPMKFLQGEKQARVLIVIAWSLSFLFSIPTLIIFGKRTLSNGEVQCWALWPDDSYWTPYMTIVAFLVYFIPLTIISIMYGIVIRTIWIKSKTYETVISNCSDGKLCSSYNRGLISKAKIKAIKYSIIIILAFICCWSPYFLFDILDNFNLLPDTQERFYASVIIQNLPALNSAINPLIYCVFSSSISFPCREQRSQDSRMTFRERTERHEMQILSKPEFI.

Over residues 1 to 21 (MPANFTEGSFDSSGTGQTLDS) the composition is skewed to polar residues. The disordered stretch occupies residues 1–22 (MPANFTEGSFDSSGTGQTLDSS). Residues 1 to 52 (MPANFTEGSFDSSGTGQTLDSSPVACTETVTFTEVVEGKEWGSFYYSFKTEQ) lie on the Extracellular side of the membrane. The N-linked (GlcNAc...) asparagine glycan is linked to Asn4. The helical transmembrane segment at 53–73 (LITLWVLFVFTIVGNSVVLFS) threads the bilayer. The Cytoplasmic portion of the chain corresponds to 74-82 (TWRRKKKSR). The helical transmembrane segment at 83–103 (MTFFVTQLAITDSFTGLVNIL) threads the bilayer. Topologically, residues 104–123 (TDINWRFTGDFTAPDLVCRV) are extracellular. Cys121 and Cys197 form a disulfide bridge. The chain crosses the membrane as a helical span at residues 124 to 144 (VRYLQVVLLYASTYVLVSLSI). The Cytoplasmic portion of the chain corresponds to 145-164 (DRYHAIVYPMKFLQGEKQAR). The helical transmembrane segment at 165-185 (VLIVIAWSLSFLFSIPTLIIF) threads the bilayer. Residues 186–212 (GKRTLSNGEVQCWALWPDDSYWTPYMT) are Extracellular-facing. Residues 213–233 (IVAFLVYFIPLTIISIMYGIV) traverse the membrane as a helical segment. Residues 234–275 (IRTIWIKSKTYETVISNCSDGKLCSSYNRGLISKAKIKAIKY) lie on the Cytoplasmic side of the membrane. Residues 276–296 (SIIIILAFICCWSPYFLFDIL) form a helical membrane-spanning segment. Topologically, residues 297-312 (DNFNLLPDTQERFYAS) are extracellular. A helical membrane pass occupies residues 313 to 333 (VIIQNLPALNSAINPLIYCVF). At 334–371 (SSSISFPCREQRSQDSRMTFRERTERHEMQILSKPEFI) the chain is on the cytoplasmic side.

This sequence belongs to the G-protein coupled receptor 1 family. Vasopressin/oxytocin receptor subfamily. As to expression, isoform 4 is ubiquitous; it is detected in glandular epithelia of bronchus, stomach, small intestine, colon, uterus, esophagus, spleen, kidney, pancreas, prostate and breast. Isoform 1 is detected in uterus, colon and prostate, and in the smooth muscle cell layer in bronchial and arterial walls (at protein level). Isoform 1 is predominantly expressed in smooth muscle. Isoform 4 is predominantly expressed in epithelial cells. In bronchial biopsies, it is expressed in smooth muscle cells of asthma patients, but not in control patients; whereas in epithelial cells, its expression is consistently stronger in asthma patients.

The protein localises to the cell membrane. It localises to the cytoplasm. G-protein coupled receptor for neuropeptide S (NPS). Promotes mobilization of intracellular Ca(2+) stores. Inhibits cell growth in response to NPS binding. Involved in pathogenesis of asthma and other IgE-mediated diseases. This Homo sapiens (Human) protein is Neuropeptide S receptor (NPSR1).